The chain runs to 170 residues: Large ribosomal subunit protein bL9 (170 aa).

Residues 149–170 (DGDNEDLDEDNAADENEDYSEE) form a disordered region.

It belongs to the bacterial ribosomal protein bL9 family.

Functionally, binds to the 23S rRNA. The polypeptide is Large ribosomal subunit protein bL9 (Psychrobacter cryohalolentis (strain ATCC BAA-1226 / DSM 17306 / VKM B-2378 / K5)).